The sequence spans 475 residues: MAKWMSVAQVKEKIKESSAEEVTAQYLDTIGKSKVNGYITVSEKALEQAKKIDVEGHNGPLAGVPIAIKDNISVVGLPNSCGSKILEDYIPPFNAYVIEKLLAAGAVILGKTNMDEFAMGSSTETSYFGPTANPWDLERVPGGSSGGSAAVVAAGEAPFALGSDTGGSVRCPAAFCGVVGLKPTYGAVSRYGVVAYANSLEQVGPLANNVTDIAVLMDVIAGYDRKDSTSIDSKTEYQKALIEDVKGLKIGVPKEFFGEGIHPDVEKAVWNAIHKCEDLGASWEEVSMPHIKYALASYYIIAMSEASSNLARFDGTRYGYRASGENWHAMVSKTRAEGFGTEVKRRILLGTYALSAGYHDKYYLKALKVRTLVKQDFDKALSKVDVLMAPTMPNPAFKIGEKIEDPLTLYLSDVNTCPINLAGVPSLSVPCGFTDGLPIGLQIMGKPFDEPAVLRAAYTFEQNTDYHTKRPPEVA.

Residues lysine 69 and serine 144 each act as charge relay system in the active site. The active-site Acyl-ester intermediate is serine 168.

The protein belongs to the amidase family. GatA subfamily. As to quaternary structure, heterotrimer of A, B and C subunits.

The enzyme catalyses L-glutamyl-tRNA(Gln) + L-glutamine + ATP + H2O = L-glutaminyl-tRNA(Gln) + L-glutamate + ADP + phosphate + H(+). Its function is as follows. Allows the formation of correctly charged Gln-tRNA(Gln) through the transamidation of misacylated Glu-tRNA(Gln) in organisms which lack glutaminyl-tRNA synthetase. The reaction takes place in the presence of glutamine and ATP through an activated gamma-phospho-Glu-tRNA(Gln). This chain is Glutamyl-tRNA(Gln) amidotransferase subunit A, found in Methanosarcina barkeri (strain Fusaro / DSM 804).